We begin with the raw amino-acid sequence, 457 residues long: V-type ATP synthase beta chain (457 aa).

Belongs to the ATPase alpha/beta chains family.

Its function is as follows. Produces ATP from ADP in the presence of a proton gradient across the membrane. The V-type beta chain is a regulatory subunit. In Clostridioides difficile (strain 630) (Peptoclostridium difficile), this protein is V-type ATP synthase beta chain.